The following is an 814-amino-acid chain: ATP-dependent 6-phosphofructokinase 1 (814 aa).

Positions 1 to 420 (MDADASTITP…NLETYKLLTK (420 aa)) are N-terminal catalytic PFK domain 1. Residues Gly55, 118–119 (RS), and 148–151 (GDGS) contribute to the ATP site. Asp149 is a Mg(2+) binding site. Substrate is bound by residues 194–196 (SID), Arg231, 238–240 (MGR), Glu294, Arg322, and 328–331 (HVQR). The active-site Proton acceptor is Asp196. Residues 421-435 (MRTVEKDNLSEGHKF) are interdomain linker. The segment at 436–814 (NVAVINVGAP…EEESADSHMF (379 aa)) is C-terminal regulatory PFK domain 2. Beta-D-fructose 2,6-bisphosphate contacts are provided by residues Lys505, 563–567 (TISNN), Arg601, 608–610 (MGG), Glu664, Arg690, 696–699 (HVQQ), and Arg771.

It belongs to the phosphofructokinase type A (PFKA) family. ATP-dependent PFK group I subfamily. Eukaryotic two domain clade 'E' sub-subfamily. Homotetramer. Mg(2+) is required as a cofactor.

The protein localises to the cytoplasm. The catalysed reaction is beta-D-fructose 6-phosphate + ATP = beta-D-fructose 1,6-bisphosphate + ADP + H(+). It functions in the pathway carbohydrate degradation; glycolysis; D-glyceraldehyde 3-phosphate and glycerone phosphate from D-glucose: step 3/4. With respect to regulation, allosterically activated by ADP, AMP, or fructose 2,6-bisphosphate, and allosterically inhibited by ATP or citrate. Functionally, catalyzes the phosphorylation of D-fructose 6-phosphate to fructose 1,6-bisphosphate by ATP, the first committing step of glycolysis. The sequence is that of ATP-dependent 6-phosphofructokinase 1 from Caenorhabditis elegans.